A 645-amino-acid polypeptide reads, in one-letter code: Acetyl-coenzyme A synthetase 2 (645 aa).

CoA contacts are provided by residues 190 to 193 (RGGK), Thr-308, and Asn-332. Residues 384-386 (GEP), 408-413 (DTWWQT), Asp-497, and Arg-512 contribute to the ATP site. Residue Ser-520 coordinates CoA. Position 523 (Arg-523) interacts with ATP. Positions 534, 536, and 539 each coordinate Mg(2+). The residue at position 606 (Lys-606) is an N6-acetyllysine.

Belongs to the ATP-dependent AMP-binding enzyme family. Requires Mg(2+) as cofactor. Post-translationally, acetylated. Deacetylation by the SIR2-homolog deacetylase activates the enzyme.

It catalyses the reaction acetate + ATP + CoA = acetyl-CoA + AMP + diphosphate. Catalyzes the conversion of acetate into acetyl-CoA (AcCoA), an essential intermediate at the junction of anabolic and catabolic pathways. AcsA undergoes a two-step reaction. In the first half reaction, AcsA combines acetate with ATP to form acetyl-adenylate (AcAMP) intermediate. In the second half reaction, it can then transfer the acetyl group from AcAMP to the sulfhydryl group of CoA, forming the product AcCoA. This chain is Acetyl-coenzyme A synthetase 2, found in Pseudomonas aeruginosa (strain ATCC 15692 / DSM 22644 / CIP 104116 / JCM 14847 / LMG 12228 / 1C / PRS 101 / PAO1).